The primary structure comprises 201 residues: Holliday junction branch migration complex subunit RuvA (201 aa).

The segment at 1 to 63 (MISHFSGTVS…EESLTLYGFV (63 aa)) is domain I. A domain II region spans residues 64–142 (EADDRDAFEL…ALAPRGASAS (79 aa)). The tract at residues 143–153 (GATHVAAPWRE) is flexible linker. The segment at 153-201 (EQVAEGLVGLGWSTKDAEKAVDKVVALKEADPAMSIGNLMRAALRSLAR) is domain III.

This sequence belongs to the RuvA family. As to quaternary structure, homotetramer. Forms an RuvA(8)-RuvB(12)-Holliday junction (HJ) complex. HJ DNA is sandwiched between 2 RuvA tetramers; dsDNA enters through RuvA and exits via RuvB. An RuvB hexamer assembles on each DNA strand where it exits the tetramer. Each RuvB hexamer is contacted by two RuvA subunits (via domain III) on 2 adjacent RuvB subunits; this complex drives branch migration. In the full resolvosome a probable DNA-RuvA(4)-RuvB(12)-RuvC(2) complex forms which resolves the HJ.

It localises to the cytoplasm. Its function is as follows. The RuvA-RuvB-RuvC complex processes Holliday junction (HJ) DNA during genetic recombination and DNA repair, while the RuvA-RuvB complex plays an important role in the rescue of blocked DNA replication forks via replication fork reversal (RFR). RuvA specifically binds to HJ cruciform DNA, conferring on it an open structure. The RuvB hexamer acts as an ATP-dependent pump, pulling dsDNA into and through the RuvAB complex. HJ branch migration allows RuvC to scan DNA until it finds its consensus sequence, where it cleaves and resolves the cruciform DNA. The sequence is that of Holliday junction branch migration complex subunit RuvA from Cutibacterium acnes (strain DSM 16379 / KPA171202) (Propionibacterium acnes).